The following is a 428-amino-acid chain: Adenylosuccinate synthetase (428 aa).

GTP-binding positions include 11-17 and 39-41; these read GDEGKGK and GHT. The active-site Proton acceptor is D12. D12 and G39 together coordinate Mg(2+). Residues 12–15, 37–40, T130, R144, N226, T241, and R305 contribute to the IMP site; these read DEGK and NAGH. H40 (proton donor) is an active-site residue. 301 to 307 contributes to the substrate binding site; the sequence is VTTGRKR. GTP contacts are provided by residues R307, 333 to 335, and 415 to 417; these read KLD and GTG.

Belongs to the adenylosuccinate synthetase family. As to quaternary structure, homodimer. The cofactor is Mg(2+).

The protein localises to the cytoplasm. It carries out the reaction IMP + L-aspartate + GTP = N(6)-(1,2-dicarboxyethyl)-AMP + GDP + phosphate + 2 H(+). Its pathway is purine metabolism; AMP biosynthesis via de novo pathway; AMP from IMP: step 1/2. In terms of biological role, plays an important role in the de novo pathway and in the salvage pathway of purine nucleotide biosynthesis. Catalyzes the first committed step in the biosynthesis of AMP from IMP. This Lodderomyces elongisporus (strain ATCC 11503 / CBS 2605 / JCM 1781 / NBRC 1676 / NRRL YB-4239) (Yeast) protein is Adenylosuccinate synthetase.